Here is a 755-residue protein sequence, read N- to C-terminus: E3 ubiquitin-protein ligase TRIM56 (755 aa).

The RING-type zinc-finger motif lies at 21-60 (CKICLEQLRAPKTLPCLHTYCQDCLAQLADGGRVRCPECR). B box-type zinc fingers lie at residues 98–149 (KPAC…VVDL) and 164–205 (RQAA…CLPL). Zn(2+) is bound by residues Cys-169, His-172, Cys-192, and His-197. Positions 216-314 (LEGLLAGVDN…AAAFARRVLS (99 aa)) form a coiled coil. The segment at 371-484 (EEQQPQKDGG…SPALGPNLDG (114 aa)) is disordered. The span at 392-404 (SQSRREDEPKTER) shows a compositional bias: basic and acidic residues. 2 positions are modified to phosphothreonine: Thr-418 and Thr-442. A compositionally biased stretch (basic and acidic residues) spans 419-447 (PKEEKAQTTREEGAQTLEEDRAQTPHEDG). The span at 453–469 (RGGRPNKKKKFKGRLKS) shows a compositional bias: basic residues. Ser-475 bears the Phosphoserine mark.

Belongs to the TRIM/RBCC family. Homooligomer. Interacts with STING1. Interacts with TICAM1. Post-translationally, (Microbial infection) Preferentially ubiquitinated with 'Lys-48' and 'Lys-11'-linked ubiquitin chains by Salmonella effector SopA leading to proteasomal targeting and degradation. In terms of processing, autoubiquitinated. Widely expressed (at protein level).

The protein localises to the cytoplasm. It carries out the reaction S-ubiquitinyl-[E2 ubiquitin-conjugating enzyme]-L-cysteine + [acceptor protein]-L-lysine = [E2 ubiquitin-conjugating enzyme]-L-cysteine + N(6)-ubiquitinyl-[acceptor protein]-L-lysine.. It functions in the pathway protein modification; protein ubiquitination. Functionally, E3 ubiquitin-protein ligase that plays a key role in innate antiviral immunity by mediating ubiquitination of CGAS and STING1. In response to pathogen- and host-derived double-stranded DNA (dsDNA), targets STING1 to 'Lys-63'-linked ubiquitination, thereby promoting its homodimerization, a step required for the production of type I interferon IFN-beta. Also mediate monoubiquitination of CGAS, thereby promoting CGAS oligomerization and subsequent activation. Promotes also TNFalpha-induced NF-kappa-B signaling by mediating 'Lys-63'-linked ubiquitination TAK1, leading to enhanced interaction between TAK1 and CHUK/IKKalpha. Independently of its E3 ubiquitin ligase activity, positive regulator of TLR3 signaling. Potentiates extracellular double stranded RNA (dsRNA)-induced expression of IFNB1 and interferon-stimulated genes ISG15, IFIT1/ISG56, CXCL10, OASL and CCL5/RANTES. Promotes establishment of an antiviral state by TLR3 ligand and TLR3-mediated chemokine induction following infection by hepatitis C virus. Acts as a restriction factor of Zika virus through direct interaction with the viral RNA via its C-terminal region. The polypeptide is E3 ubiquitin-protein ligase TRIM56 (Homo sapiens (Human)).